Consider the following 206-residue polypeptide: ATP phosphoribosyltransferase (206 aa).

Belongs to the ATP phosphoribosyltransferase family. Short subfamily. As to quaternary structure, heteromultimer composed of HisG and HisZ subunits.

Its subcellular location is the cytoplasm. It carries out the reaction 1-(5-phospho-beta-D-ribosyl)-ATP + diphosphate = 5-phospho-alpha-D-ribose 1-diphosphate + ATP. Its pathway is amino-acid biosynthesis; L-histidine biosynthesis; L-histidine from 5-phospho-alpha-D-ribose 1-diphosphate: step 1/9. In terms of biological role, catalyzes the condensation of ATP and 5-phosphoribose 1-diphosphate to form N'-(5'-phosphoribosyl)-ATP (PR-ATP). Has a crucial role in the pathway because the rate of histidine biosynthesis seems to be controlled primarily by regulation of HisG enzymatic activity. In Sulfurovum sp. (strain NBC37-1), this protein is ATP phosphoribosyltransferase.